A 66-amino-acid polypeptide reads, in one-letter code: MTTSASDRPEAGVDRKLLDILVCPITKGPLEFDAARQELISRGAKLAYPIRDGIPIMLPEEARKLG.

This sequence belongs to the UPF0434 family.

This is UPF0434 protein RPC_0266 from Rhodopseudomonas palustris (strain BisB18).